Consider the following 351-residue polypeptide: METNFSTPLNEYEEVSYESAGYTVLRILPLVVLGVTFVLGVLGNGLVIWVAGFRMTRTVTTICYLNLALADFSFTATLPFLIVSMAMGEKWPFGWFLCKLIHIVVDINLFGSVFLIGFIALDRCICVLHPVWAQNHRTVSLAMKVIVGPWILALVLTLPVFLFLTTVTIPNGDTYCTFNFASWGGTPEERLKVAITMLTARGIIRFVIGFSLPMSIVAICYGLIAAKIHKKGMIKSSRPLRVLTAVVASFFICWFPFQLVALLGTVWLKEMLFYGKYKIIDILVNPTSSLAFFNSCLNPMLYVFVGQDFRERLIHSLPTSLERALSEDSAPTNDTAANSASPPAETELQAM.

Topologically, residues 1-27 are extracellular; that stretch reads METNFSTPLNEYEEVSYESAGYTVLRI. An N-linked (GlcNAc...) asparagine glycan is attached at Asn-4. A helical transmembrane segment spans residues 28–50; sequence LPLVVLGVTFVLGVLGNGLVIWV. The Cytoplasmic segment spans residues 51–61; that stretch reads AGFRMTRTVTT. A helical transmembrane segment spans residues 62 to 83; sequence ICYLNLALADFSFTATLPFLIV. The Extracellular portion of the chain corresponds to 84-100; that stretch reads SMAMGEKWPFGWFLCKL. Cys-98 and Cys-176 are joined by a disulfide. A helical transmembrane segment spans residues 101-121; that stretch reads IHIVVDINLFGSVFLIGFIAL. At 122 to 140 the chain is on the cytoplasmic side; sequence DRCICVLHPVWAQNHRTVS. The chain crosses the membrane as a helical span at residues 141-162; it reads LAMKVIVGPWILALVLTLPVFL. Residues 163 to 205 are Extracellular-facing; sequence FLTTVTIPNGDTYCTFNFASWGGTPEERLKVAITMLTARGIIR. The chain crosses the membrane as a helical span at residues 206-226; that stretch reads FVIGFSLPMSIVAICYGLIAA. Residues 227–242 are Cytoplasmic-facing; the sequence is KIHKKGMIKSSRPLRV. A helical transmembrane segment spans residues 243-266; the sequence is LTAVVASFFICWFPFQLVALLGTV. Topologically, residues 267 to 286 are extracellular; that stretch reads WLKEMLFYGKYKIIDILVNP. The chain crosses the membrane as a helical span at residues 287 to 306; the sequence is TSSLAFFNSCLNPMLYVFVG. Residues 307–351 lie on the Cytoplasmic side of the membrane; the sequence is QDFRERLIHSLPTSLERALSEDSAPTNDTAANSASPPAETELQAM. The segment at 325–351 is disordered; that stretch reads LSEDSAPTNDTAANSASPPAETELQAM. The span at 329 to 341 shows a compositional bias: polar residues; sequence SAPTNDTAANSAS.

It belongs to the G-protein coupled receptor 1 family. In terms of assembly, interacts with Amyloid-beta protein 42, product of APP; the interaction takes place at the cell surface and the complex is then rapidly internalized. (Microbial infection) Interacts with Staphylococcus aureus protein SSL13; this interaction leads to the activation of neutrophils. As to expression, detected in lung, bone marrow, neutrophils, spleen and testis.

It localises to the cell membrane. Its function is as follows. Low affinity receptor for N-formyl-methionyl peptides, which are powerful neutrophil chemotactic factors. Binding of FMLP to the receptor causes activation of neutrophils. This response is mediated via a G-protein that activates a phosphatidylinositol-calcium second messenger system. The activation of LXA4R could result in an anti-inflammatory outcome counteracting the actions of pro-inflammatory signals such as LTB4 (leukotriene B4). Receptor for the chemokine-like protein FAM19A5, mediating FAM19A5-stimulated macrophage chemotaxis and the inhibitory effect on TNFSF11/RANKL-induced osteoclast differentiation. Acts as a receptor for humanin. The protein is N-formyl peptide receptor 2 (FPR2) of Homo sapiens (Human).